A 239-amino-acid polypeptide reads, in one-letter code: Phosducin-like protein 3 (239 aa).

Met1 is modified (N-acetylmethionine). A Phosducin domain is found at 32 to 180 (EAEEEQRILQ…EGDIKAQFIG (149 aa)). Residues Ser43, Ser234, and Ser236 each carry the phosphoserine modification. The segment at 91–239 (FGEVLEISGK…MKRDSDSEGD (149 aa)) is thioredoxin fold.

The protein belongs to the phosducin family. Interacts (via thioredoxin fold region) with KDR/VEGFR2 (via juxtamembrane domain). Forms ternary complexes with the chaperonin CCT complex and actin substrate, leading to inhibition of actin folding. Interacts with XIAP (via BIR 3 and RING domain). Interacts with HSP90AA1 and HSP90AB1. In terms of processing, N-terminal methionine acetylation destabilizes the protein.

The protein resides in the cytoplasm. Its subcellular location is the perinuclear region. It is found in the endoplasmic reticulum. In terms of biological role, acts as a chaperone for the angiogenic VEGF receptor KDR/VEGFR2, increasing its abundance by inhibiting its ubiquitination and degradation. Inhibits the folding activity of the chaperonin-containing T-complex (CCT) which leads to inhibition of cytoskeletal actin folding. Acts as a chaperone during heat shock alongside HSP90 and HSP40/70 chaperone complexes. Modulates the activation of caspases during apoptosis. The sequence is that of Phosducin-like protein 3 (PDCL3) from Pongo abelii (Sumatran orangutan).